A 430-amino-acid chain; its full sequence is Acylsugar acyltransferase 3 (430 aa).

Active-site proton acceptor residues include histidine 155 and aspartate 367.

It belongs to the plant acyltransferase family. As to quaternary structure, monomer. In terms of tissue distribution, expressed in tip cells of type I trichomes of stems and petioles, sites of acylsugars production.

Functionally, catalyzes the transfer of short (four to five carbons) branched acyl chains to the furanose ring of di-acylsucrose acceptors to produce tri-acylsucroses such as S3:15 (5,5,5), S4:17 (2,5,5,5) and S4:24 (2,5,5,12) acylsucroses. The polypeptide is Acylsugar acyltransferase 3 (Solanum lycopersicum (Tomato)).